An 87-amino-acid chain; its full sequence is Cytochrome c6 (87 aa).

4 residues coordinate heme c: cysteine 14, cysteine 17, histidine 18, and methionine 58.

It belongs to the cytochrome c family. PetJ subfamily. As to quaternary structure, monomer. Post-translationally, binds 1 heme c group covalently per subunit.

It localises to the cellular thylakoid lumen. In terms of biological role, functions as an electron carrier between membrane-bound cytochrome b6-f and photosystem I in oxygenic photosynthesis. In Aphanizomenon flos-aquae, this protein is Cytochrome c6 (petJ).